The primary structure comprises 66 residues: Protein translocase subunit SecE (66 aa).

The helical transmembrane segment at 34–54 (LVVIVAVFVFSLICLVLDYGI) threads the bilayer.

It belongs to the SecE/SEC61-gamma family. Component of the Sec protein translocase complex. Heterotrimer consisting of SecY, SecE and SecG subunits. The heterotrimers can form oligomers, although 1 heterotrimer is thought to be able to translocate proteins. Interacts with the ribosome. Interacts with SecDF, and other proteins may be involved. Interacts with SecA.

The protein resides in the cell inner membrane. Its function is as follows. Essential subunit of the Sec protein translocation channel SecYEG. Clamps together the 2 halves of SecY. May contact the channel plug during translocation. The protein is Protein translocase subunit SecE of Rickettsia bellii (strain RML369-C).